Reading from the N-terminus, the 255-residue chain is MLLVIDVGNTNIVLGIYDGERLVRDWRVSTDKARTTDEYGILINELFRLAGLGLDQIRAVIISSVVPPLTGVLERLSLGYFGMRPLVVGPGIKTGMPIQYDNPREVGADRIVNAVAGYEKYRTSLIIVDFGTATTFDYVNRKGEYCGGAIAPGLVISTEALFQRASKLPRVDIIRPSAIIARNTVNSMQAGIYYGYVGLVDEIVTRMKAESKDAPRVIATGGLASLIAPESKTIEAVEEYLTLEGLRILYERNRE.

Position 6–13 (6–13) interacts with ATP; that stretch reads DVGNTNIV. Substrate-binding positions include tyrosine 100 and 107–110; that span reads GADR. Residue aspartate 109 is the Proton acceptor of the active site. Aspartate 129 serves as a coordination point for K(+). Threonine 132 is an ATP binding site. Threonine 184 is a binding site for substrate.

Belongs to the type III pantothenate kinase family. As to quaternary structure, homodimer. It depends on NH4(+) as a cofactor. Requires K(+) as cofactor.

It localises to the cytoplasm. The catalysed reaction is (R)-pantothenate + ATP = (R)-4'-phosphopantothenate + ADP + H(+). It participates in cofactor biosynthesis; coenzyme A biosynthesis; CoA from (R)-pantothenate: step 1/5. In terms of biological role, catalyzes the phosphorylation of pantothenate (Pan), the first step in CoA biosynthesis. The chain is Type III pantothenate kinase from Geobacter sulfurreducens (strain ATCC 51573 / DSM 12127 / PCA).